The sequence spans 455 residues: MLPSQSPAIFTVSRLNQTVRLLLEHEMGQVWISGEISNFTQPASGHWYFTLKDDTAQVRCAMFRNSNRRVTFRPQHGQQVLVRANITLYEPRGDYQIIVESMQPAGEGLLQQKYEQLKAKLQAEGLFDLQYKNSLPSPAHCVGVITSKTGAALHDILHVLKRRDPSLPVIIYPTAVQGDDAPGQIVRAIELANQRNECDVLIVGRGGGSLEDLWSFNDERVARAIFASRIPVVSAVGHETDVTIADFVADLRAPTPSAAAEVVSRNQQELLRQVQSARQRLEMAMDYYLANRTRRFTQIHHRLQQQHPQLRLARQQTMLERLQKRMSFALENQLKRAGQHQQRLTQRLNQQNPQPKIHRAQTRIQQLEYRLAETLRAQLSATRERFGNAVTHLEAVSPLSTLARGYSVTSAADGAVLKQVKQVKVGETLTTRLGDGVVISEVSAVTKSRKPRKKA.

Belongs to the XseA family. Heterooligomer composed of large and small subunits.

The protein localises to the cytoplasm. It catalyses the reaction Exonucleolytic cleavage in either 5'- to 3'- or 3'- to 5'-direction to yield nucleoside 5'-phosphates.. Functionally, bidirectionally degrades single-stranded DNA into large acid-insoluble oligonucleotides, which are then degraded further into small acid-soluble oligonucleotides. The chain is Exodeoxyribonuclease 7 large subunit from Escherichia coli (strain SMS-3-5 / SECEC).